The following is a 631-amino-acid chain: Phosphomethylpyrimidine synthase (631 aa).

Substrate is bound by residues N239, M268, Y297, H333, 353 to 355, 394 to 397, and E433; these read SRG and DGLR. H437 is a binding site for Zn(2+). Y460 contacts substrate. H501 contacts Zn(2+). The [4Fe-4S] cluster site is built by C581, C584, and C589.

Belongs to the ThiC family. In terms of assembly, homodimer. Requires [4Fe-4S] cluster as cofactor.

It catalyses the reaction 5-amino-1-(5-phospho-beta-D-ribosyl)imidazole + S-adenosyl-L-methionine = 4-amino-2-methyl-5-(phosphooxymethyl)pyrimidine + CO + 5'-deoxyadenosine + formate + L-methionine + 3 H(+). It participates in cofactor biosynthesis; thiamine diphosphate biosynthesis. Catalyzes the synthesis of the hydroxymethylpyrimidine phosphate (HMP-P) moiety of thiamine from aminoimidazole ribotide (AIR) in a radical S-adenosyl-L-methionine (SAM)-dependent reaction. The sequence is that of Phosphomethylpyrimidine synthase from Shigella flexneri serotype 5b (strain 8401).